A 206-amino-acid chain; its full sequence is Phosphoribosyl-dephospho-CoA transferase (206 aa).

Catalysis depends on residues aspartate 131 and aspartate 133.

The protein belongs to the MdcG family.

The enzyme catalyses apo-[malonate decarboxylase ACP] + 2'-(5''-triphospho-alpha-D-ribosyl)-3'-dephospho-CoA = holo-[malonate decarboxylase ACP] + diphosphate. Transfers 2'-(5-triphosphoribosyl)-3'-dephosphocoenzyme-A to the apo-[acyl-carrier-protein] of the malonate decarboxylase to yield holo-[acyl-carrier-protein]. The polypeptide is Phosphoribosyl-dephospho-CoA transferase (Pseudomonas fluorescens (strain Pf0-1)).